We begin with the raw amino-acid sequence, 149 residues long: Large ribosomal subunit protein uL15 (149 aa).

Residues 1 to 12 (MSEPIKLHDLRP) are compositionally biased toward basic and acidic residues. Residues 1-55 (MSEPIKLHDLRPAKGANKPKTRVGRGEASKGKTAGRGTKGTKARKQVSAAFEGGQ) form a disordered region.

It belongs to the universal ribosomal protein uL15 family. As to quaternary structure, part of the 50S ribosomal subunit.

Functionally, binds to the 23S rRNA. The polypeptide is Large ribosomal subunit protein uL15 (Corynebacterium kroppenstedtii (strain DSM 44385 / JCM 11950 / CIP 105744 / CCUG 35717)).